The sequence spans 95 residues: Protein TusB (95 aa).

Belongs to the DsrH/TusB family. As to quaternary structure, heterohexamer, formed by a dimer of trimers. The hexameric TusBCD complex contains 2 copies each of TusB, TusC and TusD. The TusBCD complex interacts with TusE.

It localises to the cytoplasm. Functionally, part of a sulfur-relay system required for 2-thiolation of 5-methylaminomethyl-2-thiouridine (mnm(5)s(2)U) at tRNA wobble positions. This Pectobacterium carotovorum subsp. carotovorum (strain PC1) protein is Protein TusB.